Consider the following 268-residue polypeptide: Microtubule-associated protein RP/EB family member 1 (268 aa).

Ala2 carries the post-translational modification N-acetylalanine. A Calponin-homology (CH) domain is found at 14-116 (NLSRHDMLAW…FVQWFKKFFD (103 aa)). The residue at position 66 (Lys66) is an N6-crotonyllysine. Phosphotyrosine is present on Tyr124. An interaction with MTUS2/TIP150 region spans residues 124–268 (YDPVAARQGQ…GGPQEEQEEY (145 aa)). Positions 146–160 (LNKPKKPLSSSSAAP) are enriched in low complexity. Residues 146-191 (LNKPKKPLSSSSAAPQRPISTQRTAAAPKAGPGVVRKNPGVGNGDD) are disordered. Residues Ser155 and Ser165 each carry the phosphoserine modification. The EB1 C-terminal domain occupies 185–255 (GVGNGDDEAA…LYATDEGFVI (71 aa)). The tract at residues 185-268 (GVGNGDDEAA…GGPQEEQEEY (84 aa)) is interaction with CDK5RAP2. The tract at residues 206–211 (TVEDLE) is interaction with APC. The DCTN1-binding stretch occupies residues 208–268 (EDLEKERDFY…GGPQEEQEEY (61 aa)). Lys220 carries the post-translational modification N6-acetyllysine. Residues 220–242 (KLRNIELICQENEGENDPVLQRI) form an APC-binding region. The tract at residues 232-255 (EGENDPVLQRIVDILYATDEGFVI) is interaction with SKA1.

The protein belongs to the MAPRE family. In terms of assembly, homodimer. Heterodimer with MAPRE3. Interacts with DCTN1, DCTN2, TERF1 and dynein intermediate chain. Interaction with DIAPH1 and DIAPH2. Interacts (via C-terminal residues 206-211) with APC (via C-terminal residues 2674-2845); the interaction inhibits association with and bundling of F-actin. Interacts with CLASP2, DST, KIF2C and STIM1; probably required for their targeting to the growing microtubule plus ends. Interacts with MTUS2; interaction is direct and probably targets MTUS2 to microtubules. Interacts (via C-terminus) with SKA1 (via SXIP motif); the interaction is direct and stabilizes the kinetochore-microtubule attachment of the SKA1 complex. Interacts with APC2. Interacts with CLASP1. Interacts with CDK5RAP2. Interacts with MACF1. Interacts with RABL2/RABL2A; binds preferentially to GTP-bound RABL2. Interacts with KCNAB2. Interacts (via C-terminus) with CLIP1. Interacts with SLAIN2 and SLAIN1. Interacts with KIF18B; this interaction is required for efficient accumulation of KIF18B at microtubule plus ends. Interacts with MISP. Interacts with KNSTRN. Interacts with NCKAP5L. Interacts with CAMSAP2. Interacts with PDE4DIP isoform 13/MMG8/SMYLE; this interaction is required for its recruitment to the Golgi apparatus. Forms a pericentrosomal complex with AKAP9, CDK5RAP2 and PDE4DIP isoform 13/MMG8/SMYLE; within this complex, MAPRE1 binding to CDK5RAP2 may be mediated by PDE4DIP. Interacts with AKNA. Interacts with GAS2L1, GAS2L2, and GAS2L3. Interacts with RARRES1 and AGBL2. Post-translationally, acetylation at Lys-220 by KAT2B/PCAF promotes dynamic kinetochore-microtubule interactions in early mitosis. Crotonylated by KAT5 during mitosis, promoting astral microtubule plasticity and dynamic connection between astral microtubules and the cortex during mitotic chromosome segregation, thereby ensuring accurate spindle positioning in mitosis. Decrotonylated by HDAC3.

The protein localises to the cytoplasm. Its subcellular location is the cytoskeleton. It localises to the microtubule organizing center. The protein resides in the centrosome. It is found in the golgi apparatus. The protein localises to the spindle. Its subcellular location is the spindle pole. Functionally, plus-end tracking protein (+TIP) that binds to the plus-end of microtubules and regulates the dynamics of the microtubule cytoskeleton. Recruits other +TIP proteins to microtubules by binding to a conserved Ser-X-Leu-Pro (SXLP) motif in their polypeptide chains. Promotes cytoplasmic microtubule nucleation and elongation. Involved in mitotic spindle positioning by stabilizing microtubules and promoting dynamic connection between astral microtubules and the cortex during mitotic chromosome segregation. Assists chromosome alignment in metaphase by recruiting the SKA complex to the spindle and stabilizing its interactions with microtubule bundles (K-fibers). Also acts as a regulator of minus-end microtubule organization: interacts with the complex formed by AKAP9 and PDE4DIP, leading to recruit CAMSAP2 to the Golgi apparatus, thereby tethering non-centrosomal minus-end microtubules to the Golgi, an important step for polarized cell movement. Promotes elongation of CAMSAP2-decorated microtubule stretches on the minus-end of microtubules. Acts as a regulator of autophagosome transport via interaction with CAMSAP2. Functions downstream of Rho GTPases and DIAPH1 in stable microtubule formation. May play a role in cell migration. This is Microtubule-associated protein RP/EB family member 1 (MAPRE1) from Pongo abelii (Sumatran orangutan).